The sequence spans 233 residues: Synaptogyrin-4 (233 aa).

One can recognise an MARVEL domain in the interval 18-169 (FLRRPKSISR…QAYLAFQDLR (152 aa)). The next 4 membrane-spanning stretches (helical) occupy residues 25–45 (ISRI…LTDG), 66–86 (CSFA…FLAI), 104–124 (LLDF…FCFL), and 145–165 (AAIA…YLAF). The interval 191 to 233 (SPSSTSPSNPPITGPNSLSYTSSALSPYMTTPKAPRLAMMPDS) is disordered. Over residues 204-219 (GPNSLSYTSSALSPYM) the composition is skewed to polar residues.

This sequence belongs to the synaptogyrin family.

The protein localises to the membrane. The chain is Synaptogyrin-4 (Syngr4) from Mus musculus (Mouse).